Here is an 855-residue protein sequence, read N- to C-terminus: DNA mismatch repair protein MutS (855 aa).

621–628 (GPNMGGKS) serves as a coordination point for ATP.

It belongs to the DNA mismatch repair MutS family.

Its function is as follows. This protein is involved in the repair of mismatches in DNA. It is possible that it carries out the mismatch recognition step. This protein has a weak ATPase activity. The protein is DNA mismatch repair protein MutS of Francisella tularensis subsp. holarctica (strain OSU18).